The primary structure comprises 146 residues: VHMTDAEKKLVTTMWGKLDVDAAGAETLGRVLVVYPWTQRFFGHFGDLSSACAVMDNPKVQAHGKKVLHSLGDGLNHLDDLKHFYAALSELHCDKLHVDPENFRLLGNVLVCVMSRHFGAEFTPQVQAAYQKVVAGVANALAHKYH.

Val-1 is subject to N-acetylvaline. One can recognise a Globin domain in the interval 2 to 146; sequence HMTDAEKKLV…VANALAHKYH (145 aa). A Phosphothreonine modification is found at Thr-12. Lys-59 is modified (N6-acetyllysine). Heme b is bound at residue His-63. An N6-acetyllysine modification is found at Lys-82. Residue His-92 coordinates heme b. At Cys-93 the chain carries S-nitrosocysteine. Residue Lys-144 is modified to N6-acetyllysine.

This sequence belongs to the globin family. In terms of assembly, tetramer of two alpha and two different beta chains. Two external cysteine residues at beta-16 and beta-52 cause reversible polymerization to octamers and most likely irreversible formation of higher polymers. As to expression, red blood cells.

Its function is as follows. Involved in oxygen transport from the lung to the various peripheral tissues. This Echinops telfairi (Lesser hedgehog tenrec) protein is Hemoglobin subunit beta (HBB).